We begin with the raw amino-acid sequence, 417 residues long: UDP-N-acetylglucosamine 1-carboxyvinyltransferase (417 aa).

Position 22–23 (22–23 (KN)) interacts with phosphoenolpyruvate. A UDP-N-acetyl-alpha-D-glucosamine-binding site is contributed by arginine 91. Cysteine 115 functions as the Proton donor in the catalytic mechanism. Cysteine 115 carries the 2-(S-cysteinyl)pyruvic acid O-phosphothioketal modification. UDP-N-acetyl-alpha-D-glucosamine-binding positions include 120-124 (RPVDQ), aspartate 304, and isoleucine 326.

This sequence belongs to the EPSP synthase family. MurA subfamily.

Its subcellular location is the cytoplasm. It catalyses the reaction phosphoenolpyruvate + UDP-N-acetyl-alpha-D-glucosamine = UDP-N-acetyl-3-O-(1-carboxyvinyl)-alpha-D-glucosamine + phosphate. It participates in cell wall biogenesis; peptidoglycan biosynthesis. Cell wall formation. Adds enolpyruvyl to UDP-N-acetylglucosamine. The protein is UDP-N-acetylglucosamine 1-carboxyvinyltransferase of Desulfovibrio desulfuricans (strain ATCC 27774 / DSM 6949 / MB).